Here is a 374-residue protein sequence, read N- to C-terminus: MSPCPPQQSRNRVTQLPIPEPGEMELTWQEIMSITELQGLNAPSEPSFEPPAPVPYPGPPPPPSYCPCSIHSEPGFPLPAPPYELPAPTSHVPDPPYSYGSNMTVPVSKPLTLSGLLSDPLPDPLALLDIGLSAGPSKPQEDPESDSGLSLNYSDAESLELEGTEAGRRRSEYVEMYPVEYPYSLMPNSLTHPNYALPPAETPLALEPSSGPVRAKPTARGEAGSRDERRALAMKIPFPTDKIVNLPVDDFNELLARYPLTESQLALVRDIRRRGKNKVAAQNCRKRKLETIVQLERELERLGSERERLLRARGEADRTLEVMRQQLTDLYRDIFQHLRDEAGNSYSPEDYALHQAADGAIFLVPRGTKMEATD.

Disordered regions lie at residues 1 to 21 (MSPC…IPEP) and 40 to 61 (LNAP…GPPP). A required for interaction with MAPK8 region spans residues 1–83 (MSPCPPQQSR…PGFPLPAPPY (83 aa)). The interval 1 to 207 (MSPCPPQQSR…PPAETPLALE (207 aa)) is transactivation domain. The span at 48–61 (FEPPAPVPYPGPPP) shows a compositional bias: pro residues. Short sequence motifs (PXY motif) lie at residues 61–65 (PPPSY) and 79–83 (PAPPY). The disordered stretch occupies residues 132–165 (LSAGPSKPQEDPESDSGLSLNYSDAESLELEGTE). Position 158 is a phosphoserine; by MAPK8 (serine 158). Serine 171 is subject to Phosphoserine; by PKA. The segment at 207 to 227 (EPSSGPVRAKPTARGEAGSRD) is disordered. In terms of domain architecture, bZIP spans 267–330 (LVRDIRRRGK…EVMRQQLTDL (64 aa)). The segment at 269–288 (RDIRRRGKNKVAAQNCRKRK) is basic motif. The tract at residues 292–299 (IVQLEREL) is leucine-zipper. A Glycyl lysine isopeptide (Lys-Gly) (interchain with G-Cter in SUMO); alternate cross-link involves residue lysine 369. Residue lysine 369 forms a Glycyl lysine isopeptide (Lys-Gly) (interchain with G-Cter in SUMO1); alternate linkage.

It belongs to the bZIP family. CNC subfamily. In terms of assembly, homodimer; can bind DNA as a homodimer. Erythroid transcription activator nuclear factor erythroid-derived 2 (NF-E2), composed of a heterodimer of NFE2 and MAFK, possesses transactivation activity on beta-globin. Also forms high affinity heterodimer with MAFG; the interaction promotes erythropoiesis. Interacts (via the PXY motif 1) with ITCH (via the WW 1 domain); the interaction promotes 'Lys63'-linked ubiquitination of NFE2, translocates it to the cytoplasm and inhibits its transactivation activity. Interacts with KMT2D/MLL2; the interaction promotes transactivation of the beta-globin locus. Interacts with MAPK8 (phosphorylated form); the interaction leads to phosphorylation of NFE2 in undifferentiated cells. In terms of processing, phosphorylated on serine residues. In undifferentiated erythrocytes, phosphorylated by MAPK8 which then leads to ubiquitination and protein degradation. Sumoylated. Sumoylation is required for translocation to nuclear bodies PODs, anchoring to the gene loci, and transactivation of the beta-globin gene. Post-translationally, ubiquitinated mainly by 'Lys63'-linked ubiquitin. Polyubiquitination with 'Lys63'-linked ubiquitin by ITCH retains NFE2 in the cytoplasm preventing its transactivation activity. In undifferentiated erythrocyte, is ubiquitinated after MAPK8-mediatd phosphorylation leading to protein degradation.

Its subcellular location is the nucleus. It is found in the cytoplasm. In terms of biological role, component of the NF-E2 complex essential for regulating erythroid and megakaryocytic maturation and differentiation. Binds to the hypersensitive site 2 (HS2) of the beta-globin control region (LCR). This subunit (NFE2) recognizes the TCAT/C sequence of the AP-1-like core palindrome present in a number of erythroid and megakaryocytic gene promoters. Requires MAFK or other small MAF proteins for binding to the NF-E2 motif. May play a role in all aspects of hemoglobin production from globin and heme synthesis to procurement of iron. This is Transcription factor NF-E2 45 kDa subunit (NFE2) from Bos taurus (Bovine).